The primary structure comprises 303 residues: Aspartate carbamoyltransferase catalytic subunit (303 aa).

Carbamoyl phosphate-binding residues include arginine 51 and threonine 52. Lysine 80 provides a ligand contact to L-aspartate. Residues arginine 101, histidine 129, and glutamine 132 each contribute to the carbamoyl phosphate site. Arginine 162 and arginine 221 together coordinate L-aspartate. The carbamoyl phosphate site is built by leucine 260 and proline 261.

Belongs to the aspartate/ornithine carbamoyltransferase superfamily. ATCase family. In terms of assembly, heterooligomer of catalytic and regulatory chains.

The enzyme catalyses carbamoyl phosphate + L-aspartate = N-carbamoyl-L-aspartate + phosphate + H(+). It participates in pyrimidine metabolism; UMP biosynthesis via de novo pathway; (S)-dihydroorotate from bicarbonate: step 2/3. Functionally, catalyzes the condensation of carbamoyl phosphate and aspartate to form carbamoyl aspartate and inorganic phosphate, the committed step in the de novo pyrimidine nucleotide biosynthesis pathway. In Saccharolobus islandicus (strain M.16.27) (Sulfolobus islandicus), this protein is Aspartate carbamoyltransferase catalytic subunit.